The sequence spans 363 residues: Double-strand-specific pac1 ribonuclease (363 aa).

Disordered regions lie at residues 1–35 (MGRF…KRSS) and 92–138 (SRHD…PPLR). A compositionally biased stretch (low complexity) spans 13 to 22 (DSSSSASDSL). Residues 24-35 (RGRRSLGHKRSS) show a composition bias toward basic residues. Ser122 bears the Phosphoserine mark. Residues 139–262 (SEKLKEQVFM…YLGALILDGQ (124 aa)) enclose the RNase III domain. Residues 285 to 356 (RPIDKLAKSK…AMQALEVLAK (72 aa)) enclose the DRBM domain.

Requires Mg(2+) as cofactor.

It catalyses the reaction Endonucleolytic cleavage to 5'-phosphomonoester.. In terms of biological role, digests double-stranded RNA. Converts long double-stranded RNAs into short oligonucleotides, leaving 5'-phosphates on their cleavage products. Probably inhibits mating and meiosis by degrading a specific mRNA required for sexual development. The protein is Double-strand-specific pac1 ribonuclease (pac1) of Schizosaccharomyces pombe (strain 972 / ATCC 24843) (Fission yeast).